A 488-amino-acid polypeptide reads, in one-letter code: NADH-ubiquinone oxidoreductase chain 4 (488 aa).

14 helical membrane-spanning segments follow: residues Met-1–Asn-21, Ser-34–Phe-54, Val-79–Leu-99, Val-110–Val-130, Leu-134–Phe-154, Phe-164–Met-184, Leu-207–Asn-227, Pro-238–Phe-258, Tyr-272–Leu-292, Ile-301–Ile-321, Ile-328–Ile-348, Val-367–Leu-387, Leu-407–Tyr-427, and Phe-452–Ile-472.

This sequence belongs to the complex I subunit 4 family.

Its subcellular location is the mitochondrion membrane. It carries out the reaction a ubiquinone + NADH + 5 H(+)(in) = a ubiquinol + NAD(+) + 4 H(+)(out). Its function is as follows. Core subunit of the mitochondrial membrane respiratory chain NADH dehydrogenase (Complex I) that is believed to belong to the minimal assembly required for catalysis. Complex I functions in the transfer of electrons from NADH to the respiratory chain. The immediate electron acceptor for the enzyme is believed to be ubiquinone. This Aspergillus amstelodami protein is NADH-ubiquinone oxidoreductase chain 4 (ND4).